The sequence spans 393 residues: Iripin-5 (393 aa).

The signal sequence occupies residues 1 to 16 (MKTLIVLMCSLVVVWA). Residues asparagine 198 and asparagine 245 are each glycosylated (N-linked (GlcNAc...) asparagine).

Belongs to the serpin family. As to expression, highly expressed in female salivary gland during blood feeding. Expressed in female midgut and ovary during blood feeding.

It localises to the secreted. Functionally, serine protease inhibitor that modulates blood feeding of ticks on vertebrate species. Inhibits host neutrophil elastase (ELANE) and proteinase 3/myeloblastin (PRTN3). Moderately inhibits host chymase, cathepsin G (CTSG), trypsin and alpha-chymotrypsin. Decreases host neutrophil migration. Decreases nitric oxide production by host macrophages. Decreases host complement activity. The sequence is that of Iripin-5 from Ixodes ricinus (Common tick).